The sequence spans 803 residues: Leucine--tRNA ligase (803 aa).

Positions 40–51 (PYPSGAGLHVGH) match the 'HIGH' region motif. The 'KMSKS' region signature appears at 575-579 (KMSKS). Lys-578 is an ATP binding site.

Belongs to the class-I aminoacyl-tRNA synthetase family.

It is found in the cytoplasm. The enzyme catalyses tRNA(Leu) + L-leucine + ATP = L-leucyl-tRNA(Leu) + AMP + diphosphate. The sequence is that of Leucine--tRNA ligase from Listeria monocytogenes serotype 4b (strain F2365).